The chain runs to 481 residues: Cysteine--tRNA ligase (481 aa).

Cys-27 lines the Zn(2+) pocket. The short motif at 29–39 (PTVYNYAHIGN) is the 'HIGH' region element. The Zn(2+) site is built by Cys-222, His-247, and Glu-251. The 'KMSKS' region signature appears at 279-283 (KMSKS). Lys-282 contributes to the ATP binding site.

The protein belongs to the class-I aminoacyl-tRNA synthetase family. As to quaternary structure, monomer. Zn(2+) serves as cofactor.

It is found in the cytoplasm. It catalyses the reaction tRNA(Cys) + L-cysteine + ATP = L-cysteinyl-tRNA(Cys) + AMP + diphosphate. This Borrelia hermsii (strain HS1 / DAH) protein is Cysteine--tRNA ligase.